We begin with the raw amino-acid sequence, 569 residues long: Urease subunit alpha (569 aa).

The 439-residue stretch at 131 to 569 (GAIDSHIHFI…LPLAQRYLLL (439 aa)) folds into the Urease domain. Residues H136, H138, and K219 each contribute to the Ni(2+) site. K219 carries the post-translational modification N6-carboxylysine. H221 is a substrate binding site. Ni(2+)-binding residues include H248 and H274. H322 acts as the Proton donor in catalysis. Position 362 (D362) interacts with Ni(2+).

Belongs to the metallo-dependent hydrolases superfamily. Urease alpha subunit family. As to quaternary structure, heterotrimer of UreA (gamma), UreB (beta) and UreC (alpha) subunits. Three heterotrimers associate to form the active enzyme. Ni cation serves as cofactor. Post-translationally, carboxylation allows a single lysine to coordinate two nickel ions.

It is found in the cytoplasm. It carries out the reaction urea + 2 H2O + H(+) = hydrogencarbonate + 2 NH4(+). The protein operates within nitrogen metabolism; urea degradation; CO(2) and NH(3) from urea (urease route): step 1/1. The protein is Urease subunit alpha of Prochlorococcus marinus (strain NATL1A).